A 142-amino-acid polypeptide reads, in one-letter code: Maximins y/Hv type 1 (142 aa).

An N-terminal signal peptide occupies residues 1–18 (MNFKYIVAVSFLIASGYA). The propeptide occupies 19–43 (RSEENDVQSLSQREVLEEESLREIR). Phenylalanine amide is present on phenylalanine 68. A propeptide spanning residues 72-121 (TAEDHEVMKRLEAVMRDLDSLDHPEEASERETRGFNQEEIANLFTKKEKR) is cleaved from the precursor. The residue at position 141 (isoleucine 141) is an Isoleucine amide.

It belongs to the bombinin family. In terms of tissue distribution, expressed by the skin glands.

It localises to the secreted. In terms of biological role, maximin-y shows antimicrobial activity against bacteria and against the fungus C.albicans. It has little hemolytic activity. Functionally, maximin-Hv shows antimicrobial activity against bacteria and against the fungus C.albicans. Shows strong hemolytic activity. This is Maximins y/Hv type 1 from Bombina maxima (Giant fire-bellied toad).